A 178-amino-acid polypeptide reads, in one-letter code: Thioredoxin F1, chloroplastic (178 aa).

A disordered region spans residues 1–22; that stretch reads MPLSLRLSPSPTALSPTTGGFG. A chloroplast-targeting transit peptide spans 1–57; the sequence is MPLSLRLSPSPTALSPTTGGFGPSRKQCRIPYSGVPTTKIGFCSLDSRKRGDSSVVR. Residues 7–18 are compositionally biased toward polar residues; it reads LSPSPTALSPTT. In terms of domain architecture, Thioredoxin spans 58-174; sequence CSLETVNVSV…LVAAIETARS (117 aa). Active-site nucleophile residues include cysteine 99 and cysteine 102. Cysteine 99 and cysteine 102 form a disulfide bridge. Cysteine 126 carries the S-glutathionyl cysteine; transient modification.

This sequence belongs to the thioredoxin family. Plant F-type subfamily. In terms of processing, glutathionylation at Cys-126 decreases its ability to be reduced by ferredoxin-thioredoxin reductase and reduces its efficiency in activating target chloroplastic enzymes.

The protein localises to the plastid. It localises to the chloroplast stroma. Its function is as follows. Thiol-disulfide oxidoreductase involved in the redox regulation of enzymes of both reductive pentose phosphate pathway (Calvin-Benson cycle) and oxidative pentose phosphate pathway. Under light or reducing conditions, activates in chloroplast the glyceraldehyde-3-phosphate dehydrogenase, the phosphoribulokinase and the fructose-1,6-bisphosphate phosphatase, and inhibits the glucose-6-phosphate dehydrogenase. This is Thioredoxin F1, chloroplastic from Arabidopsis thaliana (Mouse-ear cress).